The following is a 493-amino-acid chain: Aspartyl/glutamyl-tRNA(Asn/Gln) amidotransferase subunit B (493 aa).

Residues 268 to 291 (HYQEADGSTSKGRPKETAEDYRYF) are disordered. A compositionally biased stretch (basic and acidic residues) spans 280-291 (RPKETAEDYRYF).

Belongs to the GatB/GatE family. GatB subfamily. As to quaternary structure, heterotrimer of A, B and C subunits.

It carries out the reaction L-glutamyl-tRNA(Gln) + L-glutamine + ATP + H2O = L-glutaminyl-tRNA(Gln) + L-glutamate + ADP + phosphate + H(+). The enzyme catalyses L-aspartyl-tRNA(Asn) + L-glutamine + ATP + H2O = L-asparaginyl-tRNA(Asn) + L-glutamate + ADP + phosphate + 2 H(+). Its function is as follows. Allows the formation of correctly charged Asn-tRNA(Asn) or Gln-tRNA(Gln) through the transamidation of misacylated Asp-tRNA(Asn) or Glu-tRNA(Gln) in organisms which lack either or both of asparaginyl-tRNA or glutaminyl-tRNA synthetases. The reaction takes place in the presence of glutamine and ATP through an activated phospho-Asp-tRNA(Asn) or phospho-Glu-tRNA(Gln). This Corynebacterium glutamicum (strain ATCC 13032 / DSM 20300 / JCM 1318 / BCRC 11384 / CCUG 27702 / LMG 3730 / NBRC 12168 / NCIMB 10025 / NRRL B-2784 / 534) protein is Aspartyl/glutamyl-tRNA(Asn/Gln) amidotransferase subunit B.